A 464-amino-acid polypeptide reads, in one-letter code: Putative dipeptidase CPC735_014430 (464 aa).

Residues 1–34 (MSTMSARDNEKGSARSQPSHAAASEIENVPRPSR) form a disordered region. A helical membrane pass occupies residues 40–56 (GTMIKVFIICACAGIVS). 3 residues coordinate Zn(2+): histidine 93, aspartate 95, and glutamate 206. Cysteine 145 and cysteine 235 are joined by a disulfide. Histidine 233 contacts substrate. The Zn(2+) site is built by histidine 277 and histidine 298. Residues arginine 309 and aspartate 369 each contribute to the substrate site. N-linked (GlcNAc...) asparagine glycosylation is present at asparagine 382.

Belongs to the metallo-dependent hydrolases superfamily. Peptidase M19 family. It depends on Zn(2+) as a cofactor.

Its subcellular location is the membrane. The catalysed reaction is an L-aminoacyl-L-amino acid + H2O = 2 an L-alpha-amino acid. In terms of biological role, hydrolyzes a wide range of dipeptides. In Coccidioides posadasii (strain C735) (Valley fever fungus), this protein is Putative dipeptidase CPC735_014430.